The sequence spans 78 residues: UPF0335 protein RBE_1185 (78 aa).

This sequence belongs to the UPF0335 family.

This Rickettsia bellii (strain RML369-C) protein is UPF0335 protein RBE_1185.